Reading from the N-terminus, the 427-residue chain is Enolase (427 aa).

Position 163 (Q163) interacts with (2R)-2-phosphoglycerate. The active-site Proton donor is the E205. Residues D242, E285, and D312 each coordinate Mg(2+). K337, R366, S367, and K388 together coordinate (2R)-2-phosphoglycerate. K337 (proton acceptor) is an active-site residue.

The protein belongs to the enolase family. It depends on Mg(2+) as a cofactor.

It is found in the cytoplasm. It localises to the secreted. The protein resides in the cell surface. The catalysed reaction is (2R)-2-phosphoglycerate = phosphoenolpyruvate + H2O. It functions in the pathway carbohydrate degradation; glycolysis; pyruvate from D-glyceraldehyde 3-phosphate: step 4/5. Catalyzes the reversible conversion of 2-phosphoglycerate (2-PG) into phosphoenolpyruvate (PEP). It is essential for the degradation of carbohydrates via glycolysis. The protein is Enolase of Rhodopseudomonas palustris (strain HaA2).